The primary structure comprises 269 residues: Shikimate dehydrogenase (NADP(+)) (269 aa).

Residues 22–24 and Thr68 contribute to the shikimate site; that span reads TLS. Lys72 (proton acceptor) is an active-site residue. Asn93 and Asp104 together coordinate shikimate. NADP(+) is bound by residues 128–132, 152–157, and Phe210; these read GAGGA and NRTKSR. Tyr212 provides a ligand contact to shikimate. Gly233 lines the NADP(+) pocket.

Belongs to the shikimate dehydrogenase family. As to quaternary structure, homodimer.

It catalyses the reaction shikimate + NADP(+) = 3-dehydroshikimate + NADPH + H(+). The protein operates within metabolic intermediate biosynthesis; chorismate biosynthesis; chorismate from D-erythrose 4-phosphate and phosphoenolpyruvate: step 4/7. In terms of biological role, involved in the biosynthesis of the chorismate, which leads to the biosynthesis of aromatic amino acids. Catalyzes the reversible NADPH linked reduction of 3-dehydroshikimate (DHSA) to yield shikimate (SA). This is Shikimate dehydrogenase (NADP(+)) from Saccharolobus solfataricus (strain ATCC 35092 / DSM 1617 / JCM 11322 / P2) (Sulfolobus solfataricus).